The sequence spans 847 residues: MMIRSHRHWVFSSRIIIFLSLLVHSLASSSPHFCRDDQRDALLEFRGEFPINASWHIMNQWRGPWNKSTDCCLWNGVTCNDKSGQVISLDIPNTFLNNYLKTNSSLFKLQYLRHLDLTNCNLYGEIPSSLGNLSHLTLVNLYFNKFVGEIPASIGNLNQLRHLILANNVLTGEIPSSLGNLSRLVNLELFSNRLVGKIPDSIGDLKQLRNLSLASNNLIGEIPSSLGNLSNLVHLVLTHNQLVGEVPASIGNLIELRVMSFENNSLSGNIPISFANLTKLSIFVLSSNNFTSTFPFDMSIFHNLEYFDVSYNSFSGPFPKSLLLIPSLESIYLQENQFTGPIEFANTSSSTKLQDLILGRNRLHGPIPESISRLLNLEELDISHNNFTGAIPPTISKLVNLLHLDLSKNNLEGEVPACLWRLNTMVLSHNSFSSFENTSQEEALIEELDLNSNSFQGPIPYMICKLSSLGFLDLSNNLFSGSIPSCIRNFSGSIKELNLGDNNFSGTLPDIFSKATELVSLDVSHNQLEGKFPKSLINCKALELVNVESNKIKDIFPSWLESLPSLHVLNLRSNKFYGPLYHRHASIGFQSLRIIDISHNNFSGTLPPYYFSNWKDMTTLTEEMDQYMTEFWRYADSYYHEMEMVNKGVDMSFERIRRDFRAIDFSGNKINGNIPESLGYLKELRVLNLSGNAFTSVIPRFLANLTKLETLDISRNKLSGQIPQDLAALSFLSYMNFSHNLLQGPVPRGTQFQRQKCSSFLDNPGLYGLEDICRDTGALNPTSQLPEDLSEAEENMFNWVAAAIAYGPGVLCGLVIGHFYTSHNHEWFTEKFGRKQHKALTSVKCSL.

An N-terminal signal peptide occupies residues 1–27 (MMIRSHRHWVFSSRIIIFLSLLVHSLA). At 28 to 798 (SSSPHFCRDD…LSEAEENMFN (771 aa)) the chain is on the extracellular side. Residues asparagine 52, asparagine 66, asparagine 103, and asparagine 132 are each glycosylated (N-linked (GlcNAc...) asparagine). 25 LRR repeats span residues 109-133 (LQYL…LGNL), 135-157 (HLTL…IGNL), 158-181 (NQLR…LGNL), 183-205 (RLVN…IGDL), 206-229 (KQLR…LGNL), 231-253 (NLVH…IGNL), 254-277 (IELR…FANL), 279-301 (KLSI…MSIF), 302-325 (HNLE…LLLI), 326-350 (PSLE…TSSS), 351-374 (TKLQ…ISRL), 375-398 (LNLE…ISKL), 400-422 (NLLH…LWRL), 424-442 (TMVL…SQEE), 443-466 (ALIE…ICKL), 467-491 (SSLG…RNFS), 492-514 (GSIK…IFSK), 516-539 (TELV…LINC), 541-562 (ALEL…WLES), 563-587 (LPSL…HASI), 589-613 (FQSL…YFSN), 657-681 (RRDF…LGYL), 682-704 (KELR…FLAN), 705-729 (LTKL…LAAL), and 731-754 (FLSY…QFQR). N-linked (GlcNAc...) asparagine glycosylation occurs at asparagine 180. Asparagine 210 and asparagine 228 each carry an N-linked (GlcNAc...) asparagine glycan. N-linked (GlcNAc...) asparagine glycans are attached at residues asparagine 263, asparagine 276, and asparagine 289. A glycan (N-linked (GlcNAc...) asparagine) is linked at asparagine 346. Asparagine 386 carries an N-linked (GlcNAc...) asparagine glycan. N-linked (GlcNAc...) asparagine glycosylation is present at asparagine 437. 2 N-linked (GlcNAc...) asparagine glycosylation sites follow: asparagine 489 and asparagine 503. An N-linked (GlcNAc...) asparagine glycan is attached at asparagine 601. N-linked (GlcNAc...) asparagine glycans are attached at residues asparagine 688 and asparagine 704. An N-linked (GlcNAc...) asparagine glycan is attached at asparagine 736. A helical transmembrane segment spans residues 799 to 819 (WVAAAIAYGPGVLCGLVIGHF). Residues 820–847 (YTSHNHEWFTEKFGRKQHKALTSVKCSL) are Cytoplasmic-facing.

This sequence belongs to the RLP family.

The protein localises to the cell membrane. In terms of biological role, involved in the perception of CLV3 and CLV3-like peptides, that act as extracellular signals regulating meristems maintenance. The polypeptide is Receptor-like protein 12 (Arabidopsis thaliana (Mouse-ear cress)).